The sequence spans 144 residues: Putative pre-16S rRNA nuclease (144 aa).

It belongs to the YqgF nuclease family.

It is found in the cytoplasm. Its function is as follows. Could be a nuclease involved in processing of the 5'-end of pre-16S rRNA. The chain is Putative pre-16S rRNA nuclease from Prochlorococcus marinus (strain NATL1A).